Reading from the N-terminus, the 317-residue chain is Beta-ketoacyl-[acyl-carrier-protein] synthase III (317 aa).

Residues C112 and H244 contribute to the active site. The tract at residues 245 to 249 (QANIR) is ACP-binding. The active site involves N274.

Belongs to the thiolase-like superfamily. FabH family. In terms of assembly, homodimer.

The protein localises to the cytoplasm. It catalyses the reaction malonyl-[ACP] + acetyl-CoA + H(+) = 3-oxobutanoyl-[ACP] + CO2 + CoA. Its pathway is lipid metabolism; fatty acid biosynthesis. Catalyzes the condensation reaction of fatty acid synthesis by the addition to an acyl acceptor of two carbons from malonyl-ACP. Catalyzes the first condensation reaction which initiates fatty acid synthesis and may therefore play a role in governing the total rate of fatty acid production. Possesses both acetoacetyl-ACP synthase and acetyl transacylase activities. Its substrate specificity determines the biosynthesis of branched-chain and/or straight-chain of fatty acids. In Rickettsia felis (strain ATCC VR-1525 / URRWXCal2) (Rickettsia azadi), this protein is Beta-ketoacyl-[acyl-carrier-protein] synthase III.